The primary structure comprises 64 residues: Large ribosomal subunit protein bL32 (64 aa).

Residues 1–64 (MAVQQNRKTR…APKHGDETEE (64 aa)) form a disordered region. The segment covering 7-16 (RKTRSKRGMR) has biased composition (basic residues).

The protein belongs to the bacterial ribosomal protein bL32 family.

This is Large ribosomal subunit protein bL32 from Methylococcus capsulatus (strain ATCC 33009 / NCIMB 11132 / Bath).